The chain runs to 341 residues: Holliday junction branch migration complex subunit RuvB (341 aa).

Residues 3 to 184 are large ATPase domain (RuvB-L); the sequence is DDFDIRDARM…FGINMHLEYY (182 aa). Residues L23, R24, G65, K68, T69, T70, 131 to 133, R174, Y184, and R221 each bind ATP; that span reads EDY. T69 contacts Mg(2+). The segment at 185–255 is small ATPAse domain (RuvB-S); that stretch reads DMETLTKIVL…IACFSLEALN (71 aa). The interval 258–341 is head domain (RuvB-H); it reads RYGLDQIDNK…RVGEQGFLFD (84 aa). 2 residues coordinate DNA: R313 and R318.

This sequence belongs to the RuvB family. In terms of assembly, homohexamer. Forms an RuvA(8)-RuvB(12)-Holliday junction (HJ) complex. HJ DNA is sandwiched between 2 RuvA tetramers; dsDNA enters through RuvA and exits via RuvB. An RuvB hexamer assembles on each DNA strand where it exits the tetramer. Each RuvB hexamer is contacted by two RuvA subunits (via domain III) on 2 adjacent RuvB subunits; this complex drives branch migration. In the full resolvosome a probable DNA-RuvA(4)-RuvB(12)-RuvC(2) complex forms which resolves the HJ.

The protein localises to the cytoplasm. It carries out the reaction ATP + H2O = ADP + phosphate + H(+). The RuvA-RuvB-RuvC complex processes Holliday junction (HJ) DNA during genetic recombination and DNA repair, while the RuvA-RuvB complex plays an important role in the rescue of blocked DNA replication forks via replication fork reversal (RFR). RuvA specifically binds to HJ cruciform DNA, conferring on it an open structure. The RuvB hexamer acts as an ATP-dependent pump, pulling dsDNA into and through the RuvAB complex. RuvB forms 2 homohexamers on either side of HJ DNA bound by 1 or 2 RuvA tetramers; 4 subunits per hexamer contact DNA at a time. Coordinated motions by a converter formed by DNA-disengaged RuvB subunits stimulates ATP hydrolysis and nucleotide exchange. Immobilization of the converter enables RuvB to convert the ATP-contained energy into a lever motion, pulling 2 nucleotides of DNA out of the RuvA tetramer per ATP hydrolyzed, thus driving DNA branch migration. The RuvB motors rotate together with the DNA substrate, which together with the progressing nucleotide cycle form the mechanistic basis for DNA recombination by continuous HJ branch migration. Branch migration allows RuvC to scan DNA until it finds its consensus sequence, where it cleaves and resolves cruciform DNA. This Parabacteroides distasonis (strain ATCC 8503 / DSM 20701 / CIP 104284 / JCM 5825 / NCTC 11152) protein is Holliday junction branch migration complex subunit RuvB.